Reading from the N-terminus, the 111-residue chain is Nucleoid-associated protein CT0805 (111 aa).

Belongs to the YbaB/EbfC family. Homodimer.

The protein localises to the cytoplasm. It localises to the nucleoid. Functionally, binds to DNA and alters its conformation. May be involved in regulation of gene expression, nucleoid organization and DNA protection. The chain is Nucleoid-associated protein CT0805 from Chlorobaculum tepidum (strain ATCC 49652 / DSM 12025 / NBRC 103806 / TLS) (Chlorobium tepidum).